The sequence spans 130 residues: Small ribosomal subunit protein uS8 (130 aa).

This sequence belongs to the universal ribosomal protein uS8 family. As to quaternary structure, part of the 30S ribosomal subunit. Contacts proteins S5 and S12.

Its function is as follows. One of the primary rRNA binding proteins, it binds directly to 16S rRNA central domain where it helps coordinate assembly of the platform of the 30S subunit. This is Small ribosomal subunit protein uS8 from Histophilus somni (strain 129Pt) (Haemophilus somnus).